Reading from the N-terminus, the 613-residue chain is Glucose-6-phosphate isomerase 1, chloroplastic (613 aa).

Residues 1–14 (MASLSGLYSSSPSL) are compositionally biased toward low complexity. Residues 1-21 (MASLSGLYSSSPSLKPAKNHS) form a disordered region. A chloroplast-targeting transit peptide spans 1–48 (MASLSGLYSSSPSLKPAKNHSFKALPAQSRDSFSFPHTSKPTNLPLTL). Residue Glu-392 is the Proton donor of the active site. Catalysis depends on residues His-421 and Lys-526. Ser-595 is modified (phosphoserine).

This sequence belongs to the GPI family.

Its subcellular location is the plastid. The protein resides in the chloroplast stroma. It carries out the reaction alpha-D-glucose 6-phosphate = beta-D-fructose 6-phosphate. It functions in the pathway carbohydrate degradation; glycolysis; D-glyceraldehyde 3-phosphate and glycerone phosphate from D-glucose: step 2/4. It participates in carbohydrate biosynthesis; gluconeogenesis. Its activity is regulated as follows. Inhibited by glycerol-3-P (G3P). Its function is as follows. Promotes the synthesis of starch in leaves. The sequence is that of Glucose-6-phosphate isomerase 1, chloroplastic (PGI1) from Arabidopsis thaliana (Mouse-ear cress).